The following is a 264-amino-acid chain: Probable aquaporin TIP3-1 (264 aa).

A run of 2 helical transmembrane segments spans residues 28–48 and 62–82; these read AAISEFLATAIFVFAAEGSIL and GLVAVSLAHALALAVAVAVAV. The NPA 1 motif lies at 90–92; sequence NPA. Transmembrane regions (helical) follow at residues 105–125, 149–169, and 176–196; these read LIRALFYWLAQLLGAVVATLL, AVLLEATMTFGLMYAYYATVI, and VGTIAPLAVGFLLGANMLAGG. The NPA 2 signature appears at 204 to 206; it reads NPA. Residues 224–244 form a helical membrane-spanning segment; it reads YWLGPFVGAGLAGLLYEYLVI.

The protein belongs to the MIP/aquaporin (TC 1.A.8) family. TIP (TC 1.A.8.10) subfamily. In terms of tissue distribution, expressed in leaves and at lower levels in roots.

Its subcellular location is the vacuole membrane. In terms of biological role, aquaporins facilitate the transport of water and small neutral solutes across cell membranes. May be involved in transport from the vacuolar compartment to the cytoplasm. This is Probable aquaporin TIP3-1 (TIP3-1) from Oryza sativa subsp. japonica (Rice).